The following is a 422-amino-acid chain: Protein arginine methyltransferase NDUFAF7, mitochondrial (422 aa).

A mitochondrion-targeting transit peptide spans 1–28; the sequence is MRTLLRLKRLMPEVLWTKRSCSSSSINK.

Belongs to the NDUFAF7 family.

It is found in the mitochondrion. It catalyses the reaction L-arginyl-[protein] + 2 S-adenosyl-L-methionine = N(omega),N(omega)'-dimethyl-L-arginyl-[protein] + 2 S-adenosyl-L-homocysteine + 2 H(+). Arginine methyltransferase involved in the assembly or stability of mitochondrial NADH:ubiquinone oxidoreductase complex (complex I). Acts by mediating symmetric dimethylation of 'Arg-118' of ndufs2 after it assembles into the complex I, stabilizing the early intermediate complex. The polypeptide is Protein arginine methyltransferase NDUFAF7, mitochondrial (Danio rerio (Zebrafish)).